Reading from the N-terminus, the 484-residue chain is GTPase Obg (484 aa).

The region spanning 7 to 164 is the Obg domain; the sequence is PRFVDRVVIH…RDLTLELKTV (158 aa). Residues 21–43 are disordered; sequence SGGNGCASVHREKFKPLGGPDGG. One can recognise an OBG-type G domain in the interval 165 to 345; that stretch reads ADVGLVGFPS…LIFGLSQMIS (181 aa). GTP-binding positions include 171–178, 196–200, 217–220, 297–300, and 326–328; these read GFPSAGKS, FTTLV, DVPG, NKID, and STA. The Mg(2+) site is built by Ser178 and Thr198. The OCT domain maps to 363 to 441; the sequence is PIPVDDSGFT…IGEMTFDWEP (79 aa). The segment at 439–484 is disordered; it reads WEPQTPAGEPVAMSGRGTDPRLDSNKRVGAAERKAARSRRREHGDG. Residues 456–473 are compositionally biased toward basic and acidic residues; the sequence is TDPRLDSNKRVGAAERKA. Basic residues predominate over residues 474 to 484; that stretch reads ARSRRREHGDG.

This sequence belongs to the TRAFAC class OBG-HflX-like GTPase superfamily. OBG GTPase family. As to quaternary structure, monomer. Mg(2+) is required as a cofactor.

It localises to the cytoplasm. Functionally, an essential GTPase which binds GTP, GDP and possibly (p)ppGpp with moderate affinity, with high nucleotide exchange rates and a fairly low GTP hydrolysis rate. Plays a role in control of the cell cycle, stress response, ribosome biogenesis and in those bacteria that undergo differentiation, in morphogenesis control. This Mycobacterium tuberculosis (strain CDC 1551 / Oshkosh) protein is GTPase Obg.